The following is a 430-amino-acid chain: Glutamate-1-semialdehyde 2,1-aminomutase (430 aa).

Lys267 carries the post-translational modification N6-(pyridoxal phosphate)lysine.

It belongs to the class-III pyridoxal-phosphate-dependent aminotransferase family. HemL subfamily. Homodimer. It depends on pyridoxal 5'-phosphate as a cofactor.

It localises to the cytoplasm. The enzyme catalyses (S)-4-amino-5-oxopentanoate = 5-aminolevulinate. Its pathway is porphyrin-containing compound metabolism; protoporphyrin-IX biosynthesis; 5-aminolevulinate from L-glutamyl-tRNA(Glu): step 2/2. In Anaeromyxobacter dehalogenans (strain 2CP-1 / ATCC BAA-258), this protein is Glutamate-1-semialdehyde 2,1-aminomutase.